A 218-amino-acid polypeptide reads, in one-letter code: Adenylate kinase (218 aa).

10-15 (GAGKGT) serves as a coordination point for ATP. The tract at residues 30-59 (STGDMLRAAVKAGTPLGLEAKKVMDAGGLV) is NMP. Residues Thr31, Arg36, 57–59 (GLV), 85–88 (GFPR), and Gln92 each bind AMP. Residues 122-159 (GRRVHPASGRSYHVRFNPPKAEGVDDVTGEPLVQRDDD) are LID. ATP-binding positions include Arg123 and 132 to 133 (SY). AMP-binding residues include Arg156 and Arg167. Gly203 contributes to the ATP binding site.

The protein belongs to the adenylate kinase family. In terms of assembly, monomer.

The protein resides in the cytoplasm. The enzyme catalyses AMP + ATP = 2 ADP. The protein operates within purine metabolism; AMP biosynthesis via salvage pathway; AMP from ADP: step 1/1. Catalyzes the reversible transfer of the terminal phosphate group between ATP and AMP. Plays an important role in cellular energy homeostasis and in adenine nucleotide metabolism. The protein is Adenylate kinase of Bordetella bronchiseptica (strain ATCC BAA-588 / NCTC 13252 / RB50) (Alcaligenes bronchisepticus).